Reading from the N-terminus, the 569-residue chain is Proline--tRNA ligase (569 aa).

It belongs to the class-II aminoacyl-tRNA synthetase family. ProS type 1 subfamily. As to quaternary structure, homodimer.

The protein resides in the cytoplasm. The enzyme catalyses tRNA(Pro) + L-proline + ATP = L-prolyl-tRNA(Pro) + AMP + diphosphate. Functionally, catalyzes the attachment of proline to tRNA(Pro) in a two-step reaction: proline is first activated by ATP to form Pro-AMP and then transferred to the acceptor end of tRNA(Pro). As ProRS can inadvertently accommodate and process non-cognate amino acids such as alanine and cysteine, to avoid such errors it has two additional distinct editing activities against alanine. One activity is designated as 'pretransfer' editing and involves the tRNA(Pro)-independent hydrolysis of activated Ala-AMP. The other activity is designated 'posttransfer' editing and involves deacylation of mischarged Ala-tRNA(Pro). The misacylated Cys-tRNA(Pro) is not edited by ProRS. In Campylobacter hominis (strain ATCC BAA-381 / DSM 21671 / CCUG 45161 / LMG 19568 / NCTC 13146 / CH001A), this protein is Proline--tRNA ligase.